The following is a 212-amino-acid chain: Octanoyltransferase (212 aa).

In terms of domain architecture, BPL/LPL catalytic spans 30–205 (ETTVDELWCL…ELVEGLGHSQ (176 aa)). Substrate is bound by residues 69-76 (RGGQVTYH), 136-138 (SLG), and 149-151 (GLA). C167 functions as the Acyl-thioester intermediate in the catalytic mechanism.

This sequence belongs to the LipB family.

It is found in the cytoplasm. It catalyses the reaction octanoyl-[ACP] + L-lysyl-[protein] = N(6)-octanoyl-L-lysyl-[protein] + holo-[ACP] + H(+). It functions in the pathway protein modification; protein lipoylation via endogenous pathway; protein N(6)-(lipoyl)lysine from octanoyl-[acyl-carrier-protein]: step 1/2. Its function is as follows. Catalyzes the transfer of endogenously produced octanoic acid from octanoyl-acyl-carrier-protein onto the lipoyl domains of lipoate-dependent enzymes. Lipoyl-ACP can also act as a substrate although octanoyl-ACP is likely to be the physiological substrate. The protein is Octanoyltransferase of Marinobacter nauticus (strain ATCC 700491 / DSM 11845 / VT8) (Marinobacter aquaeolei).